The following is a 146-amino-acid chain: Arginine repressor (146 aa).

This sequence belongs to the ArgR family.

The protein resides in the cytoplasm. Its pathway is amino-acid biosynthesis; L-arginine biosynthesis [regulation]. Functionally, regulates arginine biosynthesis genes. This chain is Arginine repressor, found in Parabacteroides distasonis (strain ATCC 8503 / DSM 20701 / CIP 104284 / JCM 5825 / NCTC 11152).